A 191-amino-acid chain; its full sequence is Dirigent protein 3 (191 aa).

Positions 1 to 21 (MSKLILILTAQILLLTATALA) are cleaved as a signal peptide. Asparagine 96 and asparagine 131 each carry an N-linked (GlcNAc...) asparagine glycan.

This sequence belongs to the plant dirigent protein family. As to quaternary structure, homodimer.

Its subcellular location is the secreted. It localises to the extracellular space. It is found in the apoplast. Its function is as follows. Dirigent proteins impart stereoselectivity on the phenoxy radical-coupling reaction, yielding optically active lignans from two molecules of coniferyl alcohol in the biosynthesis of lignans, flavonolignans, and alkaloids and thus plays a central role in plant secondary metabolism. The protein is Dirigent protein 3 (DIR3) of Arabidopsis thaliana (Mouse-ear cress).